The primary structure comprises 627 residues: Altered inheritance of mitochondria protein 9, mitochondrial (627 aa).

The N-terminal 43 residues, 1–43, are a transit peptide targeting the mitochondrion; sequence MIRYTVAGHSRRCVVGASKRVGAIKCITVAATKRFISNKPNEV.

The protein belongs to the AIM9 family.

The protein localises to the mitochondrion. The polypeptide is Altered inheritance of mitochondria protein 9, mitochondrial (AIM9) (Saccharomyces cerevisiae (strain YJM789) (Baker's yeast)).